A 72-amino-acid polypeptide reads, in one-letter code: DNA-directed RNA polymerase subunit omega (72 aa).

Belongs to the RNA polymerase subunit omega family. As to quaternary structure, the RNAP catalytic core consists of 2 alpha, 1 beta, 1 beta' and 1 omega subunit. When a sigma factor is associated with the core the holoenzyme is formed, which can initiate transcription.

It catalyses the reaction RNA(n) + a ribonucleoside 5'-triphosphate = RNA(n+1) + diphosphate. Its function is as follows. Promotes RNA polymerase assembly. Latches the N- and C-terminal regions of the beta' subunit thereby facilitating its interaction with the beta and alpha subunits. The sequence is that of DNA-directed RNA polymerase subunit omega from Clostridium acetobutylicum (strain ATCC 824 / DSM 792 / JCM 1419 / IAM 19013 / LMG 5710 / NBRC 13948 / NRRL B-527 / VKM B-1787 / 2291 / W).